Consider the following 257-residue polypeptide: Hydroxypyruvate/pyruvate aldolase (257 aa).

Residue His-48 is the Proton acceptor of the active site. Glu-152 and Asp-178 together coordinate a divalent metal cation.

The protein belongs to the HpcH/HpaI aldolase family. A divalent metal cation is required as a cofactor.

It catalyses the reaction D-glyceraldehyde + 3-hydroxypyruvate = 2-dehydro-D-gluconate. The enzyme catalyses D-glyceraldehyde + pyruvate = 2-dehydro-3-deoxy-L-galactonate. The catalysed reaction is 2-dehydro-3-deoxy-D-gluconate = D-glyceraldehyde + pyruvate. Aldolase which can catalyze in vitro the aldolisation reaction between hydroxypyruvate (HPA) or pyruvate (PA) and D-glyceraldehyde (D-GA). The condensation of hydroxypyruvate and D-glyceraldehyde produces 2-dehydro-D-gluconate as the major product. The condensation of pyruvate and D-glyceraldehyde produces 2-dehydro-3-deoxy-L-galactonate as the major product and 2-dehydro-3-deoxy-D-gluconate. This chain is Hydroxypyruvate/pyruvate aldolase, found in Roseovarius nubinhibens (strain ATCC BAA-591 / DSM 15170 / ISM).